The primary structure comprises 669 residues: DNA ligase (669 aa).

Residues 34 to 38 (DAEYD), 83 to 84 (SL), and glutamate 114 each bind NAD(+). The active-site N6-AMP-lysine intermediate is lysine 116. Residues arginine 137, glutamate 171, lysine 287, and lysine 311 each contribute to the NAD(+) site. Cysteine 405, cysteine 408, cysteine 423, and cysteine 428 together coordinate Zn(2+). A BRCT domain is found at 591 to 669 (NVESYFAGKT…EERFLQELNK (79 aa)).

This sequence belongs to the NAD-dependent DNA ligase family. LigA subfamily. The cofactor is Mg(2+). Mn(2+) serves as cofactor.

The catalysed reaction is NAD(+) + (deoxyribonucleotide)n-3'-hydroxyl + 5'-phospho-(deoxyribonucleotide)m = (deoxyribonucleotide)n+m + AMP + beta-nicotinamide D-nucleotide.. In terms of biological role, DNA ligase that catalyzes the formation of phosphodiester linkages between 5'-phosphoryl and 3'-hydroxyl groups in double-stranded DNA using NAD as a coenzyme and as the energy source for the reaction. It is essential for DNA replication and repair of damaged DNA. This Bacillus cereus (strain AH820) protein is DNA ligase.